A 747-amino-acid chain; its full sequence is Protein MTSS 2 (747 aa).

Residues 1-252 (METAEKECGA…EQVIKDLKGS (252 aa)) enclose the IMD domain. Positions 135–159 (EIKKKSSDTLKLQKKARKELLGKGD) form a coiled coil. Composition is skewed to low complexity over residues 256-284 (WSYQTPPSSPSSSSSRKSSMCSAPSSSSS), 321-332 (SSVSSHDSGFVS), and 349-367 (TSQKSSSSASSEASETCQS). Disordered regions lie at residues 256 to 302 (WSYQ…YSPS), 318 to 441 (ARLS…EEVS), 457 to 522 (LEHQ…RNSN), and 543 to 599 (PTAG…PTVP). Thr-260 is modified (phosphothreonine). Ser-264 carries the post-translational modification Phosphoserine. The span at 368–378 (VSECSSPTSDW) shows a compositional bias: polar residues. Basic and acidic residues predominate over residues 397 to 406 (DRVELLRDTE). Phosphoserine is present on Ser-441. A compositionally biased stretch (low complexity) spans 466 to 479 (SLQYSSGYSTQTTT). Polar residues predominate over residues 480–492 (PSCSEDTIPSQGS). Phosphoserine occurs at positions 579, 601, 612, 624, 634, and 639. Disordered stretches follow at residues 638–664 (LSLPNTAWGSPSPEAAGYPGAGAEDEQ) and 691–720 (GQFPFPTALSATPTEETPTPPPAATSDPPA). At Thr-643 the chain carries Phosphothreonine. 2 stretches are compositionally biased toward low complexity: residues 646–659 (GSPSPEAAGYPGAG) and 696–707 (PTALSATPTEET). One can recognise a WH2 domain in the interval 719 to 736 (PAEDMLVAIRRGVRLRRT).

It belongs to the MTSS family. Interacts (via IMD domain) with RAC1; this interaction may be important to potentiate PDGF-induced RAC1 activation.

The protein resides in the cytoplasm. It localises to the cell projection. The protein localises to the ruffle. Involved in plasma membrane dynamics. Potentiated PDGF-mediated formation of membrane ruffles and lamellipodia in fibroblasts, acting via RAC1 activation. May function in actin bundling. In Homo sapiens (Human), this protein is Protein MTSS 2.